We begin with the raw amino-acid sequence, 367 residues long: Porin Omp2a (367 aa).

Positions 1 to 22 (MNIKSLLLGSAAALVAASGAQA) are cleaved as a signal peptide.

This sequence belongs to the alphaproteobacteria porin family. In terms of assembly, monomer.

It localises to the cell outer membrane. Its function is as follows. Forms passive diffusion pores that allow small molecular weight hydrophilic materials across the outer membrane. The chain is Porin Omp2a (omp2a) from Brucella canis (strain ATCC 23365 / NCTC 10854 / RM-666).